A 499-amino-acid polypeptide reads, in one-letter code: Probable aspartyl protease At4g16563 (499 aa).

A signal peptide spans 1–26 (MKTCLIFFLYTTILQYYFHFSVSSLS). Residues 83 to 487 (YLISLSVGSS…DLLNRRVGFA (405 aa)) enclose the Peptidase A1 domain. Residue Asp-101 is part of the active site. Residues Cys-111 and Cys-119 are joined by a disulfide bond. Residues Asn-175 and Asn-211 are each glycosylated (N-linked (GlcNAc...) asparagine). The active site involves Asp-353. Residues Cys-396 and Cys-445 are joined by a disulfide bond. N-linked (GlcNAc...) asparagine glycans are attached at residues Asn-400 and Asn-415.

Belongs to the peptidase A1 family.

The polypeptide is Probable aspartyl protease At4g16563 (Arabidopsis thaliana (Mouse-ear cress)).